We begin with the raw amino-acid sequence, 318 residues long: Glycine--tRNA ligase alpha subunit (318 aa).

Belongs to the class-II aminoacyl-tRNA synthetase family. Tetramer of two alpha and two beta subunits.

Its subcellular location is the cytoplasm. The catalysed reaction is tRNA(Gly) + glycine + ATP = glycyl-tRNA(Gly) + AMP + diphosphate. This is Glycine--tRNA ligase alpha subunit from Methylibium petroleiphilum (strain ATCC BAA-1232 / LMG 22953 / PM1).